Here is a 108-residue protein sequence, read N- to C-terminus: ATP-dependent Clp protease adapter protein ClpS (108 aa).

Positions 1 to 15 (MPRESSPDSHHEHGV) are enriched in basic and acidic residues. Residues 1–24 (MPRESSPDSHHEHGVAVEPARPEV) form a disordered region.

Belongs to the ClpS family. In terms of assembly, binds to the N-terminal domain of the chaperone ClpA.

Involved in the modulation of the specificity of the ClpAP-mediated ATP-dependent protein degradation. This is ATP-dependent Clp protease adapter protein ClpS from Stenotrophomonas maltophilia (strain R551-3).